The primary structure comprises 375 residues: Probable G-protein coupled receptor 34 (375 aa).

At 1 to 54 the chain is on the extracellular side; that stretch reads MTTTSVDSWLCSSHGMHFITNYSDQASQNFSGVPNVTSCPMDEKLLSTVLTTFY. 3 N-linked (GlcNAc...) asparagine glycosylation sites follow: N21, N29, and N35. Residues 55-75 traverse the membrane as a helical segment; it reads SVIFLVGLVGNIIALYVFLGI. Residues 76–81 are Cytoplasmic-facing; sequence HRKRNS. Residues 82-102 traverse the membrane as a helical segment; sequence IQIYLLNVAVADLLLIFCLPF. Residues 103-121 are Extracellular-facing; sequence RIMYHINQNKWTLGVILCK. A disulfide bond links C120 and C197. Residues 122 to 142 traverse the membrane as a helical segment; sequence VVGTLFYMNMYISIILLGFIS. At 143-164 the chain is on the cytoplasmic side; that stretch reads LDRYIKINRSIQQRRAITTKQS. A helical membrane pass occupies residues 165–185; that stretch reads IYVCCIVWTVALAGFLTMIIL. Residues 186–209 lie on the Extracellular side of the membrane; the sequence is TLKKGGHNSTMCFHYRDRHNAKGE. The N-linked (GlcNAc...) asparagine glycan is linked to N193. Residues 210-230 traverse the membrane as a helical segment; that stretch reads AIFNFVLVVMFWLIFLLIILS. Residues 231–262 are Cytoplasmic-facing; the sequence is YIKIGKNLLRISKRRSKFPNSGKYATTARNSF. A helical transmembrane segment spans residues 263–283; it reads IVLIIFTICFVPYHAFRFIYI. Residues 284 to 303 are Extracellular-facing; that stretch reads SSQLNVSSCYWKEIIHKTNE. A glycan (N-linked (GlcNAc...) asparagine) is linked at N288. Residues 304-324 form a helical membrane-spanning segment; the sequence is IMLVFSSFNSCLDPVMYFLMS. The Cytoplasmic segment spans residues 325–375; it reads SNIRKIMCQLLFRRFQSEASRSESTSEFKPGHSLHDLSVTVKMPQYSTKGN.

Belongs to the G-protein coupled receptor 1 family. In terms of tissue distribution, highly expressed in glial cells such as astrocytes and microglia.

The protein resides in the cell membrane. G-protein-coupled receptor of lysophosphatidylserine (LysoPS) that plays different roles in immune response. Acts a damage-sensing receptor that triggers tissue repair upon recognition of dying neutrophils. Mechanistically, apoptotic neutrophils release lysophosphatydilserine that are recognized by type 3 innate lymphoid cells (ILC3s) via GPR34, which activates downstream PI3K-AKT and RAS-ERK signaling pathways leading to STAT3 activation and IL-22 production. Plays an important role in microglial function, controlling morphology and phagocytosis. This is Probable G-protein coupled receptor 34 (Gpr34) from Mus musculus (Mouse).